We begin with the raw amino-acid sequence, 479 residues long: MKNNNSSSVSIENHPWKKKPTTLLLFLSLLSISLLLLRLSQDKIILITTTKTTATTGTDHQRSHKSSEDDTCLGRYIYIHNLPSRFNLEIIKDCKSITRPKDKISMCKYLDNSGFGPLIGGKSSDYSPSWYATNQFMLEVIFHEKMKSYECLTRNSSLASAIYVPYYAGLDFRRHLRRRNVAARDAAGKELVKWLKKQPQWKDMSGKNHFLVTGRISRDFRRNSGSRSAWGTNFMLLSESLNLTFLSIERSLTSHNEFAIPYPTYFHPTSTPEILQWQEKIRLTNRTVLFSFAGAQRPSRNQNGVVRTEVIKQCKSSSKTCRFLDCDVNANSCDDPISLMKLFESSTFCLQPPGDSLTRKSVFDSILAGCIPVFFNQGSAYKQYLWHIPKNSSKYSVYITVKELRTGGKNKIEEILRGIPNERVVGMRENVIRLIPKIVYAKPNRNKPDGEILEDSFDVAVKGVLERIEGIRRNEFKTD.

Over 1–20 (MKNNNSSSVSIENHPWKKKP) the chain is Cytoplasmic. Residues 21-40 (TTLLLFLSLLSISLLLLRLS) traverse the membrane as a helical; Signal-anchor for type II membrane protein segment. Residues 41-479 (QDKIILITTT…GIRRNEFKTD (439 aa)) lie on the Lumenal side of the membrane. 4 N-linked (GlcNAc...) asparagine glycosylation sites follow: Asn-155, Asn-242, Asn-285, and Asn-391.

This sequence belongs to the glycosyltransferase 47 family. Expressed in roots, hypocotyls, cotyledons, leaves, stems and sepals.

Its subcellular location is the golgi apparatus membrane. In terms of biological role, functions in xyloglucan synthesis by adding side chains to the xylosylated glucan backbone. Involved in the galactosylation of hemicellulose xyloglucan. The polypeptide is Probable xyloglucan galactosyltransferase GT15 (Arabidopsis thaliana (Mouse-ear cress)).